The chain runs to 366 residues: tRNA/tmRNA (uracil-C(5))-methyltransferase (366 aa).

Q190, Y218, N223, E239, and D299 together coordinate S-adenosyl-L-methionine. C324 acts as the Nucleophile in catalysis. E358 acts as the Proton acceptor in catalysis.

The protein belongs to the class I-like SAM-binding methyltransferase superfamily. RNA M5U methyltransferase family. TrmA subfamily.

It catalyses the reaction uridine(54) in tRNA + S-adenosyl-L-methionine = 5-methyluridine(54) in tRNA + S-adenosyl-L-homocysteine + H(+). The catalysed reaction is uridine(341) in tmRNA + S-adenosyl-L-methionine = 5-methyluridine(341) in tmRNA + S-adenosyl-L-homocysteine + H(+). Its function is as follows. Dual-specificity methyltransferase that catalyzes the formation of 5-methyluridine at position 54 (m5U54) in all tRNAs, and that of position 341 (m5U341) in tmRNA (transfer-mRNA). The protein is tRNA/tmRNA (uracil-C(5))-methyltransferase of Shigella dysenteriae serotype 1 (strain Sd197).